The primary structure comprises 115 residues: Large ribosomal subunit protein bL19 (115 aa).

Belongs to the bacterial ribosomal protein bL19 family.

This protein is located at the 30S-50S ribosomal subunit interface and may play a role in the structure and function of the aminoacyl-tRNA binding site. The protein is Large ribosomal subunit protein bL19 of Kosmotoga olearia (strain ATCC BAA-1733 / DSM 21960 / TBF 19.5.1).